Consider the following 179-residue polypeptide: ATP synthase subunit delta (179 aa).

The protein belongs to the ATPase delta chain family. F-type ATPases have 2 components, F(1) - the catalytic core - and F(0) - the membrane proton channel. F(1) has five subunits: alpha(3), beta(3), gamma(1), delta(1), epsilon(1). F(0) has three main subunits: a(1), b(2) and c(10-14). The alpha and beta chains form an alternating ring which encloses part of the gamma chain. F(1) is attached to F(0) by a central stalk formed by the gamma and epsilon chains, while a peripheral stalk is formed by the delta and b chains.

Its subcellular location is the cell membrane. Functionally, f(1)F(0) ATP synthase produces ATP from ADP in the presence of a proton or sodium gradient. F-type ATPases consist of two structural domains, F(1) containing the extramembraneous catalytic core and F(0) containing the membrane proton channel, linked together by a central stalk and a peripheral stalk. During catalysis, ATP synthesis in the catalytic domain of F(1) is coupled via a rotary mechanism of the central stalk subunits to proton translocation. Its function is as follows. This protein is part of the stalk that links CF(0) to CF(1). It either transmits conformational changes from CF(0) to CF(1) or is implicated in proton conduction. The sequence is that of ATP synthase subunit delta from Clostridium perfringens (strain ATCC 13124 / DSM 756 / JCM 1290 / NCIMB 6125 / NCTC 8237 / Type A).